The sequence spans 315 residues: MRLRKYNKSLGWLSLFAGTVLLSGCNSALLDPKGQIGLEQRSLILTAFGLMLIVVIPAILMAVGFAWKYRASNKDAKYSPNWSHSNKVEAVVWTVPILIIIFLAVLTWKTTHALEPSKPLAHDEKPITIEVVSMDWKWFFIYPEQGIATVNEIAFPANTPVYFKVTSNSVMNSFFIPRLGSQIYAMAGMQTRLHLIANEPGTYDGISASYSGPGFSGMKFKAIATPDRAAFDQWVAKAKQSPNTMSDMAAFEKLAAPSEYNQVEYFSNVKPDLFADVINKFMAHGKSMDMTQPEGEHSAHEGMEGMDMSHAESAH.

The signal sequence occupies residues 1–24 (MRLRKYNKSLGWLSLFAGTVLLSG). A lipid anchor (N-palmitoyl cysteine) is attached at C25. C25 carries the S-diacylglycerol cysteine lipid modification. At 25 to 50 (CNSALLDPKGQIGLEQRSLILTAFGL) the chain is on the periplasmic side. Residues 51-68 (MLIVVIPAILMAVGFAWK) traverse the membrane as a helical segment. At 69 to 92 (YRASNKDAKYSPNWSHSNKVEAVV) the chain is on the cytoplasmic side. Residues 93–111 (WTVPILIIIFLAVLTWKTT) form a helical membrane-spanning segment. Residues 112–315 (HALEPSKPLA…MDMSHAESAH (204 aa)) lie on the Periplasmic side of the membrane. Residues 288–315 (MDMTQPEGEHSAHEGMEGMDMSHAESAH) form a disordered region. A compositionally biased stretch (basic and acidic residues) spans 294-315 (EGEHSAHEGMEGMDMSHAESAH).

It belongs to the cytochrome c oxidase subunit 2 family. Heterooctamer of two A chains, two B chains, two C chains and two D chains.

It is found in the cell inner membrane. Cytochrome bo(3) ubiquinol terminal oxidase is the component of the aerobic respiratory chain of E.coli that predominates when cells are grown at high aeration. Has proton pump activity across the membrane in addition to electron transfer, pumping 2 protons/electron. The chain is Cytochrome bo(3) ubiquinol oxidase subunit 2 (cyoA) from Escherichia coli O6:H1 (strain CFT073 / ATCC 700928 / UPEC).